The primary structure comprises 90 residues: Probable small nuclear ribonucleoprotein E (90 aa).

The Sm domain maps to 14–89 (VNLIFRYLQN…ITLIHAAQQE (76 aa)).

The protein belongs to the snRNP Sm proteins family. In terms of assembly, core component of the spliceosomal U1, U2, U4 and U5 small nuclear ribonucleoproteins (snRNPs), the building blocks of the spliceosome.

It localises to the nucleus. The protein resides in the cytoplasm. It is found in the cytosol. Functionally, plays a role in pre-mRNA splicing as a core component of the spliceosomal U1, U2, U4 and U5 small nuclear ribonucleoproteins (snRNPs), the building blocks of the spliceosome. This Caenorhabditis elegans protein is Probable small nuclear ribonucleoprotein E (snr-6).